The following is a 352-amino-acid chain: Photosystem II D2 protein (352 aa).

Thr-2 carries the N-acetylthreonine modification. Position 2 is a phosphothreonine (Thr-2). The helical transmembrane segment at 40–60 threads the bilayer; it reads CAYFAVGGWLTGTTFVTSWYT. Chlorophyll a is bound at residue His-117. A helical membrane pass occupies residues 124–140; it reads GFMLRQFEIARAIGLRP. Gln-129 and Asn-142 together coordinate pheophytin a. A helical membrane pass occupies residues 152–165; that stretch reads VFVSVFLIYPLGQS. Residue His-197 coordinates chlorophyll a. A helical membrane pass occupies residues 207-227; sequence AALLCAIHGATVENTLFEDGD. A plastoquinone-binding residues include His-214 and Phe-261. His-214 contributes to the Fe cation binding site. His-268 serves as a coordination point for Fe cation. A helical membrane pass occupies residues 278–294; that stretch reads GLWMSAIGVVGLALNLR.

Belongs to the reaction center PufL/M/PsbA/D family. In terms of assembly, PSII is composed of 1 copy each of membrane proteins PsbA, PsbB, PsbC, PsbD, PsbE, PsbF, PsbH, PsbI, PsbJ, PsbK, PsbL, PsbM, PsbT, PsbX, PsbY, PsbZ, Psb30/Ycf12, at least 3 peripheral proteins of the oxygen-evolving complex and a large number of cofactors. It forms dimeric complexes. It depends on The D1/D2 heterodimer binds P680, chlorophylls that are the primary electron donor of PSII, and subsequent electron acceptors. It shares a non-heme iron and each subunit binds pheophytin, quinone, additional chlorophylls, carotenoids and lipids. There is also a Cl(-1) ion associated with D1 and D2, which is required for oxygen evolution. The PSII complex binds additional chlorophylls, carotenoids and specific lipids. as a cofactor.

It is found in the plastid. Its subcellular location is the chloroplast thylakoid membrane. It carries out the reaction 2 a plastoquinone + 4 hnu + 2 H2O = 2 a plastoquinol + O2. Its function is as follows. Photosystem II (PSII) is a light-driven water:plastoquinone oxidoreductase that uses light energy to abstract electrons from H(2)O, generating O(2) and a proton gradient subsequently used for ATP formation. It consists of a core antenna complex that captures photons, and an electron transfer chain that converts photonic excitation into a charge separation. The D1/D2 (PsbA/PsbD) reaction center heterodimer binds P680, the primary electron donor of PSII as well as several subsequent electron acceptors. D2 is needed for assembly of a stable PSII complex. The polypeptide is Photosystem II D2 protein (Nephroselmis olivacea (Green alga)).